Reading from the N-terminus, the 486-residue chain is Glutamyl-tRNA(Gln) amidotransferase subunit A (486 aa).

Catalysis depends on charge relay system residues K78 and S153. S177 functions as the Acyl-ester intermediate in the catalytic mechanism.

It belongs to the amidase family. GatA subfamily. As to quaternary structure, heterotrimer of A, B and C subunits.

The enzyme catalyses L-glutamyl-tRNA(Gln) + L-glutamine + ATP + H2O = L-glutaminyl-tRNA(Gln) + L-glutamate + ADP + phosphate + H(+). Allows the formation of correctly charged Gln-tRNA(Gln) through the transamidation of misacylated Glu-tRNA(Gln) in organisms which lack glutaminyl-tRNA synthetase. The reaction takes place in the presence of glutamine and ATP through an activated gamma-phospho-Glu-tRNA(Gln). This is Glutamyl-tRNA(Gln) amidotransferase subunit A from Syntrophobacter fumaroxidans (strain DSM 10017 / MPOB).